The primary structure comprises 291 residues: ATP phosphoribosyltransferase (291 aa).

It belongs to the ATP phosphoribosyltransferase family. Long subfamily. Mg(2+) is required as a cofactor.

The protein resides in the cytoplasm. The catalysed reaction is 1-(5-phospho-beta-D-ribosyl)-ATP + diphosphate = 5-phospho-alpha-D-ribose 1-diphosphate + ATP. The protein operates within amino-acid biosynthesis; L-histidine biosynthesis; L-histidine from 5-phospho-alpha-D-ribose 1-diphosphate: step 1/9. With respect to regulation, feedback inhibited by histidine. Functionally, catalyzes the condensation of ATP and 5-phosphoribose 1-diphosphate to form N'-(5'-phosphoribosyl)-ATP (PR-ATP). Has a crucial role in the pathway because the rate of histidine biosynthesis seems to be controlled primarily by regulation of HisG enzymatic activity. This is ATP phosphoribosyltransferase from Desulfosudis oleivorans (strain DSM 6200 / JCM 39069 / Hxd3) (Desulfococcus oleovorans).